The sequence spans 310 residues: Antiviral protein II/III (310 aa).

An N-terminal signal peptide occupies residues 1–25 (MKMKVLEVVGLAISIWLMLTPPASS). Intrachain disulfides connect cysteine 57–cysteine 284 and cysteine 106–cysteine 123. Tyrosine 94 is an active-site residue. Active-site residues include tyrosine 142, glutamate 197, and arginine 200.

This sequence belongs to the ribosome-inactivating protein family. Type 1 RIP subfamily. As to expression, PAP-II is expressed in early summer leaves (at protein level). PAP-III is expressed in late summer leaves (at protein level).

The enzyme catalyses Endohydrolysis of the N-glycosidic bond at one specific adenosine on the 28S rRNA.. Its function is as follows. Possesses antiviral potency. Inhibits viral infection of plants (tobacco mosaic virus). Inhibits protein synthesis in both prokaryotes and eukaryotes. The polypeptide is Antiviral protein II/III (PAP2) (Phytolacca americana (American pokeweed)).